The primary structure comprises 56 residues: Large ribosomal subunit protein bL32 (56 aa).

Residues M1–L38 are disordered. A compositionally biased stretch (basic residues) spans K7–R16.

The protein belongs to the bacterial ribosomal protein bL32 family.

The polypeptide is Large ribosomal subunit protein bL32 (Histophilus somni (strain 129Pt) (Haemophilus somnus)).